Reading from the N-terminus, the 218-residue chain is Peptidyl-tRNA hydrolase (218 aa).

Tyrosine 19 serves as a coordination point for tRNA. Residue histidine 24 is the Proton acceptor of the active site. Residues tyrosine 68, asparagine 70, and asparagine 116 each contribute to the tRNA site. The disordered stretch occupies residues 181-218 (WNTATQRLNARPAPPKPPKAPKAPQPAAADQPKDESQP). A compositionally biased stretch (pro residues) spans 192–204 (PAPPKPPKAPKAP).

This sequence belongs to the PTH family. Monomer.

It is found in the cytoplasm. It carries out the reaction an N-acyl-L-alpha-aminoacyl-tRNA + H2O = an N-acyl-L-amino acid + a tRNA + H(+). Its function is as follows. Hydrolyzes ribosome-free peptidyl-tRNAs (with 1 or more amino acids incorporated), which drop off the ribosome during protein synthesis, or as a result of ribosome stalling. In terms of biological role, catalyzes the release of premature peptidyl moieties from peptidyl-tRNA molecules trapped in stalled 50S ribosomal subunits, and thus maintains levels of free tRNAs and 50S ribosomes. The protein is Peptidyl-tRNA hydrolase of Azoarcus sp. (strain BH72).